Consider the following 444-residue polypeptide: Glutamate-1-semialdehyde 2,1-aminomutase (444 aa).

Lys-267 carries the N6-(pyridoxal phosphate)lysine modification.

This sequence belongs to the class-III pyridoxal-phosphate-dependent aminotransferase family. HemL subfamily. Homodimer. It depends on pyridoxal 5'-phosphate as a cofactor.

The protein resides in the cytoplasm. It carries out the reaction (S)-4-amino-5-oxopentanoate = 5-aminolevulinate. Its pathway is porphyrin-containing compound metabolism; protoporphyrin-IX biosynthesis; 5-aminolevulinate from L-glutamyl-tRNA(Glu): step 2/2. The sequence is that of Glutamate-1-semialdehyde 2,1-aminomutase from Xylella fastidiosa (strain 9a5c).